A 476-amino-acid chain; its full sequence is MAQPANQVGRITQVIGAVVDVQFDGYLPAILNAIETTNQGHRLVLEVAQHLGESTVRAIAMDTTEGLVRGQEVTDTGAPIKVPVGEGTLGRIMNVVGEPVDEGGPVKADGTRAIHQEAPAYTEQSTEAEILVTGIKVVDLLAPYAKGGKIGLFGGAGVGKTVLIQELINNVAKAHGGYSVFAGVGERTREGNDLYHEFIESGVNKKGGGEGSKCALVYGQMNEPPGARARVGLTGLTVAEHFRDQGQDVLFFVDNIFRFTQAGSEVSALLGRIPSAVGYQPTLATDMGALQERITTTTKGSITSVQAIYVPADDLTDPAPATSFAHLDATTVLNRAISEKGIYPAVDPLDSTSRMLSPLVVGEEHYQTARMVQQVLQRYKSLQDIIAILGMDELSEEDKLTVARARKIERFLSQPFHVAEVFTGSPGKFVELADTIKGFKGLCEGKYDHLPEAAFYMVGTIEEAVEKGKKLAAEAA.

Position 154–161 (154–161) interacts with ATP; it reads GGAGVGKT.

This sequence belongs to the ATPase alpha/beta chains family. F-type ATPases have 2 components, CF(1) - the catalytic core - and CF(0) - the membrane proton channel. CF(1) has five subunits: alpha(3), beta(3), gamma(1), delta(1), epsilon(1). CF(0) has three main subunits: a(1), b(2) and c(9-12). The alpha and beta chains form an alternating ring which encloses part of the gamma chain. CF(1) is attached to CF(0) by a central stalk formed by the gamma and epsilon chains, while a peripheral stalk is formed by the delta and b chains.

Its subcellular location is the cell inner membrane. The catalysed reaction is ATP + H2O + 4 H(+)(in) = ADP + phosphate + 5 H(+)(out). Its function is as follows. Produces ATP from ADP in the presence of a proton gradient across the membrane. The catalytic sites are hosted primarily by the beta subunits. This Afipia carboxidovorans (strain ATCC 49405 / DSM 1227 / KCTC 32145 / OM5) (Oligotropha carboxidovorans) protein is ATP synthase subunit beta.